Here is a 98-residue protein sequence, read N- to C-terminus: Gas vesicle protein A (98 aa).

The protein belongs to the gas vesicle GvpA family. The gas vesicle shell is 2 nm thick and consists of a single layer of this protein. It forms helical ribs nearly perpendicular to the long axis of the vesicle.

The protein resides in the gas vesicle shell. Gas vesicles are hollow, gas filled proteinaceous nanostructures found in some microorganisms. During planktonic growth they allow positioning of the organism at a favorable depth for light or nutrient acquisition. GvpA forms the protein shell. The sequence is that of Gas vesicle protein A from Koribacter versatilis (strain Ellin345).